The chain runs to 313 residues: Dioxygenase swnH2 (313 aa).

Fe cation is bound by residues histidine 155, aspartate 157, and histidine 232.

The protein belongs to the PhyH family. As to quaternary structure, homodimer. Fe cation is required as a cofactor.

Its pathway is mycotoxin biosynthesis. Aminotransferase; part of the gene cluster that mediates the biosynthesis of swainsonine (SW), a cytotoxic fungal alkaloid and a potential cancer therapy drug. Swainsonine production occurs via a multibranched pathway and is dispensable for fungal colonization of plants and infection of insect hosts. The first step of swainsonine biosynthesis is the production of the precursor pipecolic acid (PA) via conversion of L-lysine (Lys) to 1-piperideine-6-carboxylate (P6C) by the aminotransferase swnA, the latter being further reduced to PA by the reductase swnR. The PKS-NRPS hybrid synthetase swnK uptakes and condensates PA and malonyl-CoA with and without skipping of the ketoreductase (KR) domain in order to produce 3 intermediates, 1-oxoindolizidine, (1S)-1-hydroxyindolizin, and (1R)-1-hydroxyindolizine; with the transisomer (1S)-1-hydroxyindolizin being predominant. The terminal thioester reductase (TE) domain of swnK is involved in reduction of the thioester bond to release the intermediate aldehydes. The oxidoreductase swnN could contribute to the reduction of 1-oxoindolizidine to (1S)-1-hydroxyindolizin and (1R)-1-hydroxyindolizine, contributing to the major route of SW production. The dioxygenase swnH2 would be responsible for the oxidization of (1R)-1-hydroxyindolizine into (1R,2S)-1,2-dihydroxyindolizine and of (1S)-1-hydroxyindolizin to yield both (1R,2S)-1,2-dihydroxyindolizine and (1S,2S)-1,2-dihydroxyindolizine. The dioxygenase swnH1 then performs the conversion of the 1,2-dihydroxyindolizine epimers to SW. This is Dioxygenase swnH2 from Arthroderma benhamiae (strain ATCC MYA-4681 / CBS 112371) (Trichophyton mentagrophytes).